A 77-amino-acid chain; its full sequence is Conotoxin Ar5.1 a (77 aa).

Residues 1–19 form the signal peptide; it reads MLCLPVFIILLLLASPAAS. A propeptide spanning residues 20 to 44 is cleaved from the precursor; the sequence is NPLETRIQSDLIRAALEDADMKNEK.

This sequence belongs to the conotoxin T superfamily. In terms of processing, contains 2 disulfide bonds that can be either 'C1-C3, C2-C4' or 'C1-C4, C2-C3', since these disulfide connectivities have been observed for conotoxins with cysteine framework V (for examples, see AC P0DQQ7 and AC P81755). In terms of tissue distribution, expressed by the venom duct.

It localises to the secreted. In Conus arenatus (Sand-dusted cone), this protein is Conotoxin Ar5.1 a.